Here is a 530-residue protein sequence, read N- to C-terminus: Ubiquitin carboxyl-terminal hydrolase 17 (530 aa).

The region spanning 80 to 375 (AGLQNMGNTC…QAYVLFYIQK (296 aa)) is the USP domain. Catalysis depends on C89, which acts as the Nucleophile. The Proton acceptor role is filled by H334. Composition is skewed to basic and acidic residues over residues 382–392 (SESVSRGREPR) and 398–413 (DTDR…RDHP). 2 disordered regions span residues 382 to 416 (SESV…PCLQ) and 490 to 530 (SSTT…LVCQ). The mediates interaction with SUDS3 stretch occupies residues 399–530 (TDRRATQGEL…HSKRALLVCQ (132 aa)). The segment covering 498 to 510 (ESVNTGTLASLQG) has biased composition (polar residues). Residues 511–524 (RTRRSKGKNKHSKR) are compositionally biased toward basic residues.

This sequence belongs to the peptidase C19 family. USP17 subfamily. Interacts with SUDS3; the interaction is direct. Broadly expressed.

It localises to the nucleus. Its subcellular location is the endoplasmic reticulum. It carries out the reaction Thiol-dependent hydrolysis of ester, thioester, amide, peptide and isopeptide bonds formed by the C-terminal Gly of ubiquitin (a 76-residue protein attached to proteins as an intracellular targeting signal).. Functionally, deubiquitinating enzyme that removes conjugated ubiquitin from specific proteins to regulate different cellular processes. Regulates cell proliferation by deubiquitinating and inhibiting RCE1 thereby controlling the small GTPases NRAS and HRAS localization and activation. In parallel, mediates deubiquitination of CDC25A, preventing CDC25A degradation by the proteasome during the G1/S and G2/M phases promoting cell-cycle progression. Also regulates cell proliferation and apoptosis through deubiquitination of SUDS3 a regulator of histone deacetylation. Through activation of the Rho family GTPases RAC1A, CDC42 and RHOA, regulates cell migration. Through the cleavage of 'Lys-48'- and 'Lys-63'-linked polyubiquitin chains of the cytoplasmic innate immune receptors RIGI and IFIH1 stimulates the cellular response to viral infection. The sequence is that of Ubiquitin carboxyl-terminal hydrolase 17 (USP17L2) from Homo sapiens (Human).